The chain runs to 166 residues: NAD(P)H-quinone oxidoreductase subunit I, chloroplastic (166 aa).

4Fe-4S ferredoxin-type domains follow at residues 55–84 and 95–124; these read GRIHFEFDKCIACEVCVRVCPIDLPVVDWK and LNYSIDFGICIFCGNCVEYCPTNCLSMTEE. The [4Fe-4S] cluster site is built by Cys-64, Cys-67, Cys-70, Cys-74, Cys-104, Cys-107, Cys-110, and Cys-114.

This sequence belongs to the complex I 23 kDa subunit family. In terms of assembly, NDH is composed of at least 16 different subunits, 5 of which are encoded in the nucleus. It depends on [4Fe-4S] cluster as a cofactor.

The protein resides in the plastid. Its subcellular location is the chloroplast thylakoid membrane. It carries out the reaction a plastoquinone + NADH + (n+1) H(+)(in) = a plastoquinol + NAD(+) + n H(+)(out). It catalyses the reaction a plastoquinone + NADPH + (n+1) H(+)(in) = a plastoquinol + NADP(+) + n H(+)(out). Its function is as follows. NDH shuttles electrons from NAD(P)H:plastoquinone, via FMN and iron-sulfur (Fe-S) centers, to quinones in the photosynthetic chain and possibly in a chloroplast respiratory chain. The immediate electron acceptor for the enzyme in this species is believed to be plastoquinone. Couples the redox reaction to proton translocation, and thus conserves the redox energy in a proton gradient. The protein is NAD(P)H-quinone oxidoreductase subunit I, chloroplastic of Pericome caudata (Mountain tail-leaf).